A 525-amino-acid chain; its full sequence is MTRLFRLCKIIFVILYHGLDQLALSGFKSRRIRALVWVLTLGRRQTRPRGERLRLALEQLGPIFVKFGQVLSTRRDLLPPDVADELAKLQDRVPPFDPKIAAAIVERSLGKPLSALFHRFDHHPVASASIAQVHFATLRGGPDDGREVAVKVLRPGMLPVIDSDLALMRDVATWMEKLWADGKRLKPREVVAEFDKYLHDELDLMREAANASQLRRNFAKSELLLVPEVFWDWCTSEVFVMERMHGVRVSHADELRAAGVDTHKLARDGVEIFFTQVFRDGFFHADMHPGNILVSVAPESLGRYIALDFGIVGALSEFDKNYLAQNFLAFFQRDYHRVALLHVESGWAPEETRVEELEGAIRACCEPYFDRPLGEISLGLVLMRLFQTSRRFNVEVQPQLVLLQKTLLNVEGLGRQLDPDLDLWKTAKPFLERWMHEQIGWRGLVDRLKIEAPQWANMLPDFPRLAHQILERHARDNGSAQTATLSALLAEQRRTNRLLSAALLFIGGFAVGIIATHVLAWLARH.

A Protein kinase domain is found at 119 to 501 (RFDHHPVASA…QRRTNRLLSA (383 aa)). Residues 125–133 (VASASIAQV) and Lys-151 contribute to the ATP site. The active-site Proton acceptor is the Asp-286. A helical membrane pass occupies residues 502–522 (ALLFIGGFAVGIIATHVLAWL).

The protein belongs to the ABC1 family. UbiB subfamily.

It localises to the cell inner membrane. It functions in the pathway cofactor biosynthesis; ubiquinone biosynthesis [regulation]. Is probably a protein kinase regulator of UbiI activity which is involved in aerobic coenzyme Q (ubiquinone) biosynthesis. This is Probable protein kinase UbiB from Ralstonia nicotianae (strain ATCC BAA-1114 / GMI1000) (Ralstonia solanacearum).